The chain runs to 91 residues: Alpha-defensin 31 (91 aa).

Positions 1-19 (MKKLVLLFALVLLAFQVQA) are cleaved as a signal peptide. The propeptide occupies 20 to 65 (DSIQNTDEETKTEEQQGEEDQAVSVSFGDPQGSGLQDAALGWGRRC). The interval 22–55 (IQNTDEETKTEEQQGEEDQAVSVSFGDPQGSGLQ) is disordered. 6 consecutive repeat copies span residues 65–67 (CPR), 68–70 (CPP), 71–73 (CPR), 77–79 (CPR), 80–82 (CPT), and 83–85 (CPR). The segment at 65–85 (CPRCPPCPRCSWCPRCPTCPR) is 6 X 3 AA tandem repeats of C-P-X.

It belongs to the alpha-defensin family. Paneth cells of the small bowel.

It is found in the secreted. In terms of biological role, apparent precursor of a secreted, cationic, proline- and cysteine-rich peptide that contains Cys-Pro-Xaa repeats. Unlike cryptdin, the proposed mature peptide region lacks the structural motif characteristic of defensins. It may have microbicidal activities. The sequence is that of Alpha-defensin 31 from Mus musculus (Mouse).